Here is a 645-residue protein sequence, read N- to C-terminus: Zinc finger protein 235 (645 aa).

Residues 8–86 enclose the KRAB domain; that stretch reads VTFRDVAVVF…TSHDVNKLAR (79 aa). 2 disordered regions span residues 112–144 and 255–280; these read GAEQ…EFLS and KKSP…SVHP. Polar residues predominate over residues 129–144; it reads LPSNHSSSSDNQEFLS. 13 consecutive C2H2-type zinc fingers follow at residues 285-307, 313-335, 341-363, 369-391, 397-419, 425-447, 453-475, 481-503, 509-531, 537-559, 565-587, 593-615, and 621-643; these read YWCH…QRVH, YRCD…RRVH, YKCE…ERIH, YKCG…QRVH, YECN…QRVH, YKCE…QRVH, FHCS…QRIH, YRCE…QSVH, YKCG…HSVH, FKCN…QRVH, YKCD…QRIH, FKCE…QRVH, and YTCQ…QRVH.

This sequence belongs to the krueppel C2H2-type zinc-finger protein family.

The protein localises to the nucleus. May be involved in transcriptional regulation. This is Zinc finger protein 235 (Znf235) from Mus musculus (Mouse).